A 195-amino-acid chain; its full sequence is dCTP deaminase (195 aa).

DCTP-binding positions include 109-114 (RSSLAR), Asp-127, 135-137 (TLE), Tyr-170, Lys-177, and Gln-181. Residue Glu-137 is the Proton donor/acceptor of the active site.

Belongs to the dCTP deaminase family. Homotrimer.

It catalyses the reaction dCTP + H2O + H(+) = dUTP + NH4(+). Its pathway is pyrimidine metabolism; dUMP biosynthesis; dUMP from dCTP (dUTP route): step 1/2. Functionally, catalyzes the deamination of dCTP to dUTP. This is dCTP deaminase from Rhodospirillum rubrum (strain ATCC 11170 / ATH 1.1.1 / DSM 467 / LMG 4362 / NCIMB 8255 / S1).